Reading from the N-terminus, the 232-residue chain is U2 small nuclear ribonucleoprotein B'' (232 aa).

Residues glutamine 10–threonine 89 form the RRM 1 domain. The segment at arginine 90–isoleucine 159 is disordered. Basic and acidic residues predominate over residues lysine 108–glutamate 123. Residues serine 127–glutamate 151 are compositionally biased toward polar residues. One can recognise an RRM 2 domain in the interval asparagine 158–lysine 232.

Belongs to the RRM U1 A/B'' family. Component of the spliceosome where it is associated with snRNP U2.

It localises to the nucleus. It is found in the cajal body. The protein localises to the nucleoplasm. Its subcellular location is the cytoplasm. Involved in nuclear pre-mRNA splicing. The chain is U2 small nuclear ribonucleoprotein B'' from Oryza sativa subsp. japonica (Rice).